Reading from the N-terminus, the 148-residue chain is Endoribonuclease YbeY (148 aa).

Zn(2+) contacts are provided by His113, His117, and His123.

The protein belongs to the endoribonuclease YbeY family. It depends on Zn(2+) as a cofactor.

The protein resides in the cytoplasm. Functionally, single strand-specific metallo-endoribonuclease involved in late-stage 70S ribosome quality control and in maturation of the 3' terminus of the 16S rRNA. This is Endoribonuclease YbeY from Borrelia recurrentis (strain A1).